The chain runs to 449 residues: Glucose-6-phosphate isomerase (449 aa).

Glu291 serves as the catalytic Proton donor. Catalysis depends on residues His312 and Lys426.

It belongs to the GPI family.

It localises to the cytoplasm. It carries out the reaction alpha-D-glucose 6-phosphate = beta-D-fructose 6-phosphate. It participates in carbohydrate biosynthesis; gluconeogenesis. The protein operates within carbohydrate degradation; glycolysis; D-glyceraldehyde 3-phosphate and glycerone phosphate from D-glucose: step 2/4. Its function is as follows. Catalyzes the reversible isomerization of glucose-6-phosphate to fructose-6-phosphate. This Clostridium botulinum (strain Eklund 17B / Type B) protein is Glucose-6-phosphate isomerase.